The sequence spans 288 residues: 4-hydroxy-tetrahydrodipicolinate synthase (288 aa).

Threonine 42 contributes to the pyruvate binding site. The Proton donor/acceptor role is filled by tyrosine 129. The Schiff-base intermediate with substrate role is filled by lysine 158. Isoleucine 200 is a pyruvate binding site.

Belongs to the DapA family. Homotetramer; dimer of dimers.

It is found in the cytoplasm. It carries out the reaction L-aspartate 4-semialdehyde + pyruvate = (2S,4S)-4-hydroxy-2,3,4,5-tetrahydrodipicolinate + H2O + H(+). Its pathway is amino-acid biosynthesis; L-lysine biosynthesis via DAP pathway; (S)-tetrahydrodipicolinate from L-aspartate: step 3/4. Catalyzes the condensation of (S)-aspartate-beta-semialdehyde [(S)-ASA] and pyruvate to 4-hydroxy-tetrahydrodipicolinate (HTPA). This Thermosipho melanesiensis (strain DSM 12029 / CIP 104789 / BI429) protein is 4-hydroxy-tetrahydrodipicolinate synthase.